The chain runs to 882 residues: Leucine--tRNA ligase (882 aa).

The 'HIGH' region signature appears at proline 43–histidine 53. The 'KMSKS' region motif lies at lysine 634–serine 638. Lysine 637 lines the ATP pocket.

This sequence belongs to the class-I aminoacyl-tRNA synthetase family.

It is found in the cytoplasm. It carries out the reaction tRNA(Leu) + L-leucine + ATP = L-leucyl-tRNA(Leu) + AMP + diphosphate. This chain is Leucine--tRNA ligase, found in Rhodopseudomonas palustris (strain BisB18).